The sequence spans 273 residues: 3-methyl-2-oxobutanoate hydroxymethyltransferase (273 aa).

The Mg(2+) site is built by Asp41 and Asp80. 3-methyl-2-oxobutanoate contacts are provided by residues 41 to 42, Asp80, and Lys110; that span reads DS. Glu112 lines the Mg(2+) pocket. Glu180 (proton acceptor) is an active-site residue.

This sequence belongs to the PanB family. As to quaternary structure, homodecamer; pentamer of dimers. The cofactor is Mg(2+).

The protein localises to the cytoplasm. It catalyses the reaction 3-methyl-2-oxobutanoate + (6R)-5,10-methylene-5,6,7,8-tetrahydrofolate + H2O = 2-dehydropantoate + (6S)-5,6,7,8-tetrahydrofolate. It functions in the pathway cofactor biosynthesis; (R)-pantothenate biosynthesis; (R)-pantoate from 3-methyl-2-oxobutanoate: step 1/2. In terms of biological role, catalyzes the reversible reaction in which hydroxymethyl group from 5,10-methylenetetrahydrofolate is transferred onto alpha-ketoisovalerate to form ketopantoate. This chain is 3-methyl-2-oxobutanoate hydroxymethyltransferase, found in Deinococcus geothermalis (strain DSM 11300 / CIP 105573 / AG-3a).